We begin with the raw amino-acid sequence, 272 residues long: 2,3,4,5-tetrahydropyridine-2,6-dicarboxylate N-succinyltransferase (272 aa).

Substrate is bound by residues Arg104 and Asp141.

The protein belongs to the transferase hexapeptide repeat family. Homotrimer.

It is found in the cytoplasm. It catalyses the reaction (S)-2,3,4,5-tetrahydrodipicolinate + succinyl-CoA + H2O = (S)-2-succinylamino-6-oxoheptanedioate + CoA. It functions in the pathway amino-acid biosynthesis; L-lysine biosynthesis via DAP pathway; LL-2,6-diaminopimelate from (S)-tetrahydrodipicolinate (succinylase route): step 1/3. The sequence is that of 2,3,4,5-tetrahydropyridine-2,6-dicarboxylate N-succinyltransferase from Alkalilimnicola ehrlichii (strain ATCC BAA-1101 / DSM 17681 / MLHE-1).